Reading from the N-terminus, the 223-residue chain is Deoxyribose-phosphate aldolase (223 aa).

The Proton donor/acceptor role is filled by Asp-92. The active-site Schiff-base intermediate with acetaldehyde is the Lys-154. The active-site Proton donor/acceptor is Lys-182.

This sequence belongs to the DeoC/FbaB aldolase family. DeoC type 1 subfamily.

It is found in the cytoplasm. It carries out the reaction 2-deoxy-D-ribose 5-phosphate = D-glyceraldehyde 3-phosphate + acetaldehyde. The protein operates within carbohydrate degradation; 2-deoxy-D-ribose 1-phosphate degradation; D-glyceraldehyde 3-phosphate and acetaldehyde from 2-deoxy-alpha-D-ribose 1-phosphate: step 2/2. Its function is as follows. Catalyzes a reversible aldol reaction between acetaldehyde and D-glyceraldehyde 3-phosphate to generate 2-deoxy-D-ribose 5-phosphate. The protein is Deoxyribose-phosphate aldolase of Haemophilus influenzae (strain 86-028NP).